Consider the following 406-residue polypeptide: MIVQPKVRGFICTTAHPEGCARHVGEWINYAKQQPSLTGGPQKVLIIGASTGFGLASRIVAAFGAGAKTIGVFFERPASGKRTASPGWYNTAAFEKTALAAGLYAKSISGDAFSDEIKQQTIDLIQKDWQGGVDLVIYSIASPRRVHPRTGEIFNSVLKPIGQTYHNKTVDVMTGEVSPVSIEPATEKEIRDTEAVMGGDDWALWINALFKYNCLAEGVKTVAFTYIGPELTHAVYRNGTIGRAKLHLEKTARELDTQLESALSGQALISVNKALVTQASAAIPVVPLYISLLYKIMKEKNIHEGCIEQMWRLFKERLYSNQNIPTDSEGRIRIDDWEMREDVQAEIKRLWESINTGNVETLSDIAGYREDFYKLFGFGLNGIDYERGVEIEKAIPSITVTPENPE.

NAD(+) is bound by residues 48–53 (GASTGF), 74–75 (FE), 111–112 (DA), and 140–141 (IA). A substrate-binding site is contributed by Y226. Residue Y236 is the Proton donor of the active site. Residues K245 and 275-277 (LVT) each bind NAD(+).

The protein belongs to the TER reductase family. In terms of assembly, monomer.

It catalyses the reaction a 2,3-saturated acyl-[ACP] + NAD(+) = a (2E)-enoyl-[ACP] + NADH + H(+). The protein operates within lipid metabolism; fatty acid biosynthesis. Its function is as follows. Involved in the final reduction of the elongation cycle of fatty acid synthesis (FAS II). Catalyzes the reduction of a carbon-carbon double bond in an enoyl moiety that is covalently linked to an acyl carrier protein (ACP). In Coxiella burnetii (strain Dugway 5J108-111), this protein is Enoyl-[acyl-carrier-protein] reductase [NADH].